The chain runs to 334 residues: N-acetylmuramoyl-L-alanine amidase sle1 (334 aa).

The signal sequence occupies residues 1–25; the sequence is MQKKVIAAIIGTSAISAVAATQANA. A LysM 1 domain is found at 27-70; that stretch reads TTHTVKPGESVWAISNKYGISIAKLKSLNNLTSNLIFPNQVLKV. Residues 71-86 show a composition bias toward low complexity; sequence SGSSNSTSNSSRPSTN. The disordered stretch occupies residues 71 to 90; it reads SGSSNSTSNSSRPSTNSGGG. 2 LysM domains span residues 91–134 and 158–201; these read SYYT…KLKV. The Peptidase C51 domain occupies 210-334; the sequence is GSATTTNRGY…YQVNNYRYIH (125 aa).

Its subcellular location is the secreted. It localises to the cell surface. It catalyses the reaction Hydrolyzes the link between N-acetylmuramoyl residues and L-amino acid residues in certain cell-wall glycopeptides.. Functionally, peptidoglycan hydrolase involved in the splitting of the septum during cell division. This Staphylococcus aureus (strain USA300) protein is N-acetylmuramoyl-L-alanine amidase sle1 (sle1).